We begin with the raw amino-acid sequence, 461 residues long: Bifunctional protein GlmU (461 aa).

Positions Met-1–Lys-229 are pyrophosphorylase. Residues Leu-11–Gly-14, Lys-25, Gln-76, Gly-81–Thr-82, Tyr-103–Asp-105, Gly-140, Glu-154, and Asn-227 each bind UDP-N-acetyl-alpha-D-glucosamine. Asp-105 is a binding site for Mg(2+). Asn-227 provides a ligand contact to Mg(2+). Positions Leu-230 to Ser-250 are linker. Positions Gly-251 to Gln-461 are N-acetyltransferase. Residues Arg-333 and Lys-351 each contribute to the UDP-N-acetyl-alpha-D-glucosamine site. The Proton acceptor role is filled by His-363. Positions 366 and 377 each coordinate UDP-N-acetyl-alpha-D-glucosamine. Acetyl-CoA is bound by residues Ala-380, Asn-386–Tyr-387, and Ala-423.

The protein in the N-terminal section; belongs to the N-acetylglucosamine-1-phosphate uridyltransferase family. This sequence in the C-terminal section; belongs to the transferase hexapeptide repeat family. In terms of assembly, homotrimer. It depends on Mg(2+) as a cofactor.

It localises to the cytoplasm. It carries out the reaction alpha-D-glucosamine 1-phosphate + acetyl-CoA = N-acetyl-alpha-D-glucosamine 1-phosphate + CoA + H(+). The catalysed reaction is N-acetyl-alpha-D-glucosamine 1-phosphate + UTP + H(+) = UDP-N-acetyl-alpha-D-glucosamine + diphosphate. The protein operates within nucleotide-sugar biosynthesis; UDP-N-acetyl-alpha-D-glucosamine biosynthesis; N-acetyl-alpha-D-glucosamine 1-phosphate from alpha-D-glucosamine 6-phosphate (route II): step 2/2. It functions in the pathway nucleotide-sugar biosynthesis; UDP-N-acetyl-alpha-D-glucosamine biosynthesis; UDP-N-acetyl-alpha-D-glucosamine from N-acetyl-alpha-D-glucosamine 1-phosphate: step 1/1. Its pathway is bacterial outer membrane biogenesis; LPS lipid A biosynthesis. In terms of biological role, catalyzes the last two sequential reactions in the de novo biosynthetic pathway for UDP-N-acetylglucosamine (UDP-GlcNAc). The C-terminal domain catalyzes the transfer of acetyl group from acetyl coenzyme A to glucosamine-1-phosphate (GlcN-1-P) to produce N-acetylglucosamine-1-phosphate (GlcNAc-1-P), which is converted into UDP-GlcNAc by the transfer of uridine 5-monophosphate (from uridine 5-triphosphate), a reaction catalyzed by the N-terminal domain. In Buchnera aphidicola subsp. Schizaphis graminum (strain Sg), this protein is Bifunctional protein GlmU.